Consider the following 719-residue polypeptide: Polyribonucleotide nucleotidyltransferase (719 aa).

Mg(2+) contacts are provided by aspartate 507 and aspartate 513. In terms of domain architecture, KH spans 573-633; sequence PKLELFSVDP…EQIKAAKDYI (61 aa). The region spanning 658–719 is the S1 motif domain; sequence GQEFQGIVKK…NGKISVDLCE (62 aa).

The protein belongs to the polyribonucleotide nucleotidyltransferase family. Mg(2+) is required as a cofactor.

The protein localises to the cytoplasm. It carries out the reaction RNA(n+1) + phosphate = RNA(n) + a ribonucleoside 5'-diphosphate. Functionally, involved in mRNA degradation. Catalyzes the phosphorolysis of single-stranded polyribonucleotides processively in the 3'- to 5'-direction. This chain is Polyribonucleotide nucleotidyltransferase, found in Campylobacter jejuni subsp. jejuni serotype O:23/36 (strain 81-176).